A 302-amino-acid polypeptide reads, in one-letter code: Recombination-associated protein RdgC (302 aa).

This sequence belongs to the RdgC family.

It localises to the cytoplasm. Its subcellular location is the nucleoid. Its function is as follows. May be involved in recombination. The sequence is that of Recombination-associated protein RdgC from Xylella fastidiosa (strain M12).